A 195-amino-acid chain; its full sequence is Guanylate kinase (195 aa).

The region spanning 7 to 186 (GVLLVLSSPS…SVEEISSILD (180 aa)) is the Guanylate kinase-like domain. ATP is bound at residue 14-21 (SPSGAGKT).

Belongs to the guanylate kinase family.

Its subcellular location is the cytoplasm. It catalyses the reaction GMP + ATP = GDP + ADP. Essential for recycling GMP and indirectly, cGMP. This Wolbachia sp. subsp. Brugia malayi (strain TRS) protein is Guanylate kinase.